We begin with the raw amino-acid sequence, 386 residues long: 8-amino-7-oxononanoate synthase (386 aa).

Arg-31 lines the substrate pocket. Pyridoxal 5'-phosphate is bound at residue Gly-109–Tyr-110. Residue His-134 coordinates substrate. Residues Ser-180, Asp-205–His-208, and Thr-236–Lys-239 contribute to the pyridoxal 5'-phosphate site. An N6-(pyridoxal phosphate)lysine modification is found at Lys-239. Thr-349 provides a ligand contact to substrate.

The protein belongs to the class-II pyridoxal-phosphate-dependent aminotransferase family. BioF subfamily. As to quaternary structure, homodimer. The cofactor is pyridoxal 5'-phosphate.

It catalyses the reaction 6-carboxyhexanoyl-[ACP] + L-alanine + H(+) = (8S)-8-amino-7-oxononanoate + holo-[ACP] + CO2. The protein operates within cofactor biosynthesis; biotin biosynthesis. In terms of biological role, catalyzes the decarboxylative condensation of pimeloyl-[acyl-carrier protein] and L-alanine to produce 8-amino-7-oxononanoate (AON), [acyl-carrier protein], and carbon dioxide. This chain is 8-amino-7-oxononanoate synthase, found in Mycobacterium bovis (strain ATCC BAA-935 / AF2122/97).